The sequence spans 346 residues: L-glyceraldehyde 3-phosphate reductase (346 aa).

12 residues coordinate NADP(+): Trp33, Asp61, Tyr66, Ser168, Gln193, Thr223, Leu225, Gln227, Lys233, Ser303, Gln307, and Asn311.

This sequence belongs to the shaker potassium channel beta subunit family.

The catalysed reaction is a primary alcohol + NADP(+) = an aldehyde + NADPH + H(+). Its function is as follows. Aldo-keto reductase that catalyzes the stereospecific, NADPH-dependent reduction of L-glyceraldehyde 3-phosphate (L-GAP) to L-glycerol 3-phosphate (L-G3P). The protein is L-glyceraldehyde 3-phosphate reductase of Escherichia coli O157:H7.